Here is a 216-residue protein sequence, read N- to C-terminus: Heart- and neural crest derivatives-expressed protein 2 (216 aa).

Residues 74–115 (MDHSHYGGVPPGSGPPGLGGPRPVKRRGTANRKERRRTQSIN) form a disordered region. The segment covering 82–93 (VPPGSGPPGLGG) has biased composition (gly residues). Residues 96–111 (PVKRRGTANRKERRRT) show a composition bias toward basic residues. Residues 98-150 (KRRGTANRKERRRTQSINSAFAELRECIPNVPADTKLSKIKTLRLATSYIAYL) form the bHLH domain.

In terms of assembly, efficient DNA binding requires dimerization with another bHLH protein.

The protein resides in the nucleus. Its function is as follows. Essential for cardiac morphogenesis. Binds DNA on E-box consensus sequence 5'-CANNTG-3'. Plays an important role in limb development, particularly in the establishment of anterior-posterior polarization of the limb bud. This is Heart- and neural crest derivatives-expressed protein 2 (HAND2) from Gallus gallus (Chicken).